A 389-amino-acid polypeptide reads, in one-letter code: Succinyl-diaminopimelate desuccinylase (389 aa).

H75 serves as a coordination point for Zn(2+). The active site involves D77. Zn(2+) is bound at residue D108. E142 serves as the catalytic Proton acceptor. Residues E143, E171, and H357 each contribute to the Zn(2+) site.

Belongs to the peptidase M20A family. DapE subfamily. As to quaternary structure, homodimer. Requires Zn(2+) as cofactor. Co(2+) serves as cofactor.

It catalyses the reaction N-succinyl-(2S,6S)-2,6-diaminopimelate + H2O = (2S,6S)-2,6-diaminopimelate + succinate. It participates in amino-acid biosynthesis; L-lysine biosynthesis via DAP pathway; LL-2,6-diaminopimelate from (S)-tetrahydrodipicolinate (succinylase route): step 3/3. Functionally, catalyzes the hydrolysis of N-succinyl-L,L-diaminopimelic acid (SDAP), forming succinate and LL-2,6-diaminopimelate (DAP), an intermediate involved in the bacterial biosynthesis of lysine and meso-diaminopimelic acid, an essential component of bacterial cell walls. This is Succinyl-diaminopimelate desuccinylase from Paracidovorax citrulli (strain AAC00-1) (Acidovorax citrulli).